The primary structure comprises 493 residues: ATP synthase subunit beta (493 aa).

An ATP-binding site is contributed by 169 to 176 (GGAGVGKT).

Belongs to the ATPase alpha/beta chains family. F-type ATPases have 2 components, CF(1) - the catalytic core - and CF(0) - the membrane proton channel. CF(1) has five subunits: alpha(3), beta(3), gamma(1), delta(1), epsilon(1). CF(0) has three main subunits: a(1), b(2) and c(9-12). The alpha and beta chains form an alternating ring which encloses part of the gamma chain. CF(1) is attached to CF(0) by a central stalk formed by the gamma and epsilon chains, while a peripheral stalk is formed by the delta and b chains.

The protein localises to the cell inner membrane. The catalysed reaction is ATP + H2O + 4 H(+)(in) = ADP + phosphate + 5 H(+)(out). Its function is as follows. Produces ATP from ADP in the presence of a proton gradient across the membrane. The catalytic sites are hosted primarily by the beta subunits. The sequence is that of ATP synthase subunit beta from Gluconacetobacter diazotrophicus (strain ATCC 49037 / DSM 5601 / CCUG 37298 / CIP 103539 / LMG 7603 / PAl5).